The primary structure comprises 284 residues: Bifunctional protein FolD (284 aa).

NADP(+)-binding positions include 165–167 and serine 190; that span reads GRS.

It belongs to the tetrahydrofolate dehydrogenase/cyclohydrolase family. In terms of assembly, homodimer.

The enzyme catalyses (6R)-5,10-methylene-5,6,7,8-tetrahydrofolate + NADP(+) = (6R)-5,10-methenyltetrahydrofolate + NADPH. It catalyses the reaction (6R)-5,10-methenyltetrahydrofolate + H2O = (6R)-10-formyltetrahydrofolate + H(+). It participates in one-carbon metabolism; tetrahydrofolate interconversion. Its function is as follows. Catalyzes the oxidation of 5,10-methylenetetrahydrofolate to 5,10-methenyltetrahydrofolate and then the hydrolysis of 5,10-methenyltetrahydrofolate to 10-formyltetrahydrofolate. The chain is Bifunctional protein FolD from Streptococcus pyogenes serotype M2 (strain MGAS10270).